A 458-amino-acid chain; its full sequence is ATP synthase subunit beta (458 aa).

148 to 155 contributes to the ATP binding site; the sequence is GGAGVGKT.

The protein belongs to the ATPase alpha/beta chains family. As to quaternary structure, F-type ATPases have 2 components, CF(1) - the catalytic core - and CF(0) - the membrane proton channel. CF(1) has five subunits: alpha(3), beta(3), gamma(1), delta(1), epsilon(1). CF(0) has three main subunits: a(1), b(2) and c(9-12). The alpha and beta chains form an alternating ring which encloses part of the gamma chain. CF(1) is attached to CF(0) by a central stalk formed by the gamma and epsilon chains, while a peripheral stalk is formed by the delta and b chains.

Its subcellular location is the cell inner membrane. It carries out the reaction ATP + H2O + 4 H(+)(in) = ADP + phosphate + 5 H(+)(out). Its function is as follows. Produces ATP from ADP in the presence of a proton gradient across the membrane. The catalytic sites are hosted primarily by the beta subunits. This chain is ATP synthase subunit beta, found in Pseudomonas aeruginosa (strain LESB58).